The sequence spans 109 residues: Nucleoid-associated protein HAPS_1040 (109 aa).

The disordered stretch occupies residues 1–21 (MFGKGGLGGLMKQAQQMQERM). Residues 10 to 19 (LMKQAQQMQE) are compositionally biased toward low complexity.

Belongs to the YbaB/EbfC family. As to quaternary structure, homodimer.

The protein localises to the cytoplasm. It is found in the nucleoid. Functionally, binds to DNA and alters its conformation. May be involved in regulation of gene expression, nucleoid organization and DNA protection. This Glaesserella parasuis serovar 5 (strain SH0165) (Haemophilus parasuis) protein is Nucleoid-associated protein HAPS_1040.